We begin with the raw amino-acid sequence, 287 residues long: Ferredoxin-type protein NapH (287 aa).

Residues 1–29 (MANRKRDAGREALEKKGWWRSHRWLVLRR) lie on the Cytoplasmic side of the membrane. The helical transmembrane segment at 30-50 (LCQFFVLGMFLSGPWFGVWIL) threads the bilayer. Residues 51–79 (HGNYSSSLLFDTVPLTDPLMTLQSLASGH) are Periplasmic-facing. A helical transmembrane segment spans residues 80-100 (LPATVALTGAVIITVLYALAG). The Cytoplasmic portion of the chain corresponds to 101-139 (KRLFCSWVCPLNPITDLANWLRRRFDLNQSATIPRHIRY). Residues 140–160 (VLLVVILVGSALTGTLIWEWI) form a helical membrane-spanning segment. Residues 161–170 (NPVSLMGRSL) are Periplasmic-facing. Residues 171-191 (VMGFGSGALLILALFLFDLLV) traverse the membrane as a helical segment. Topologically, residues 192–287 (VEHGWCGHIC…TTRWSSGAKS (96 aa)) are cytoplasmic. 4Fe-4S ferredoxin-type domains lie at 217–247 (TVAA…APVL) and 251–280 (SPVQ…ITTR). Residues cysteine 226, cysteine 229, cysteine 232, cysteine 236, cysteine 260, cysteine 263, cysteine 266, and cysteine 270 each contribute to the [4Fe-4S] cluster site.

As to quaternary structure, interacts with NapC. The cofactor is [4Fe-4S] cluster.

It is found in the cell inner membrane. Functionally, required for electron transfer from ubiquinol, via NapC, to the periplasmic nitrate reductase NapAB complex. In Escherichia coli (strain K12), this protein is Ferredoxin-type protein NapH (napH).